The primary structure comprises 264 residues: MESGFTSKDAYLSHFNPQDYLEKYYNFGAKHSAEDQILRHLLKILFKIFCLDGVKGDLLIDIGSGPTIYQLLSACESFKEIIATDYTDQNLQELEKWLKKEPGAFDWSPVVTYVCELEGNRVKGTEKEEKLRRAVKRVLKCDVTQSWPLGAVPLPPADCLLSTLCLHAACPDLPTYRTALGNLRSLLKPGGFLVLVDALKSSYYMIGEQRFSSLCLGQEAVEAAVREAGYTIEHFEVISQSYSSTMANNEGLFSLVGRKLSPCV.

Residues Tyr20, Tyr25, Gly63, Tyr69, Asp85, and Asn90 each coordinate S-adenosyl-L-methionine. Arg132 is modified (citrulline; alternate). S-adenosyl-L-methionine contacts are provided by residues 142–143 and Thr163; that span reads DV. Residues Asp197 and Ser213 each contribute to the nicotinamide site.

Belongs to the class I-like SAM-binding methyltransferase superfamily. NNMT/PNMT/TEMT family. Monomer. Post-translationally, deiminated by PADI1 and PADI2.

It is found in the cytoplasm. The enzyme catalyses nicotinamide + S-adenosyl-L-methionine = 1-methylnicotinamide + S-adenosyl-L-homocysteine. It functions in the pathway cofactor metabolism. Its pathway is amino-acid degradation. Catalyzes the N-methylation of nicotinamide using the universal methyl donor S-adenosyl-L-methionine to form N1-methylnicotinamide and S-adenosyl-L-homocysteine, a predominant nicotinamide/vitamin B3 clearance pathway. Plays a central role in regulating cellular methylation potential, by consuming S-adenosyl-L-methionine and limiting its availability for other methyltransferases. Actively mediates genome-wide epigenetic and transcriptional changes through hypomethylation of repressive chromatin marks, such as H3K27me3. In a developmental context, contributes to low levels of the repressive histone marks that characterize pluripotent embryonic stem cell pre-implantation state. Acts as a metabolic regulator primarily on white adipose tissue energy expenditure as well as hepatic gluconeogenesis and cholesterol biosynthesis. In white adipocytes, regulates polyamine flux by consuming S-adenosyl-L-methionine which provides for propylamine group in polyamine biosynthesis, whereas by consuming nicotinamide controls NAD(+) levels through the salvage pathway. Via its product N1-methylnicotinamide regulates protein acetylation in hepatocytes, by repressing the ubiquitination and increasing the stability of SIRT1 deacetylase. Can also N-methylate other pyridines structurally related to nicotinamide and play a role in xenobiotic detoxification. This chain is Nicotinamide N-methyltransferase (NNMT), found in Sus scrofa (Pig).